A 356-amino-acid chain; its full sequence is UDP-N-acetylglucosamine--N-acetylmuramyl-(pentapeptide) pyrophosphoryl-undecaprenol N-acetylglucosamine transferase (356 aa).

Residues 14-16, asparagine 126, arginine 162, serine 190, isoleucine 244, and glutamine 289 each bind UDP-N-acetyl-alpha-D-glucosamine; that span reads TGG.

The protein belongs to the glycosyltransferase 28 family. MurG subfamily.

The protein localises to the cell inner membrane. The catalysed reaction is di-trans,octa-cis-undecaprenyl diphospho-N-acetyl-alpha-D-muramoyl-L-alanyl-D-glutamyl-meso-2,6-diaminopimeloyl-D-alanyl-D-alanine + UDP-N-acetyl-alpha-D-glucosamine = di-trans,octa-cis-undecaprenyl diphospho-[N-acetyl-alpha-D-glucosaminyl-(1-&gt;4)]-N-acetyl-alpha-D-muramoyl-L-alanyl-D-glutamyl-meso-2,6-diaminopimeloyl-D-alanyl-D-alanine + UDP + H(+). It participates in cell wall biogenesis; peptidoglycan biosynthesis. Functionally, cell wall formation. Catalyzes the transfer of a GlcNAc subunit on undecaprenyl-pyrophosphoryl-MurNAc-pentapeptide (lipid intermediate I) to form undecaprenyl-pyrophosphoryl-MurNAc-(pentapeptide)GlcNAc (lipid intermediate II). The sequence is that of UDP-N-acetylglucosamine--N-acetylmuramyl-(pentapeptide) pyrophosphoryl-undecaprenol N-acetylglucosamine transferase from Cupriavidus pinatubonensis (strain JMP 134 / LMG 1197) (Cupriavidus necator (strain JMP 134)).